Reading from the N-terminus, the 505-residue chain is ATP synthase subunit alpha (505 aa).

Position 170 to 177 (170 to 177) interacts with ATP; that stretch reads GDRQTGKT.

It belongs to the ATPase alpha/beta chains family. In terms of assembly, F-type ATPases have 2 components, CF(1) - the catalytic core - and CF(0) - the membrane proton channel. CF(1) has five subunits: alpha(3), beta(3), gamma(1), delta(1), epsilon(1). CF(0) has four main subunits: a(1), b(1), b'(1) and c(9-12).

The protein resides in the cellular thylakoid membrane. The catalysed reaction is ATP + H2O + 4 H(+)(in) = ADP + phosphate + 5 H(+)(out). Produces ATP from ADP in the presence of a proton gradient across the membrane. The alpha chain is a regulatory subunit. This is ATP synthase subunit alpha from Prochlorococcus marinus (strain SARG / CCMP1375 / SS120).